A 389-amino-acid polypeptide reads, in one-letter code: Putative nickel insertion protein (389 aa).

This sequence belongs to the LarC family.

This is Putative nickel insertion protein from Desulfotalea psychrophila (strain LSv54 / DSM 12343).